The chain runs to 1328 residues: Peroxidasin homolog pxn-2 (1328 aa).

Residues 1 to 16 (MLLEFLLLIGISLSTA) form the signal peptide. Residues 17-45 (CPSECRCAGLDVHCEGKNLTAIPGHIPIA) enclose the LRRNT domain. The N-linked (GlcNAc...) asparagine glycan is linked to Asn-34. LRR repeat units lie at residues 42-66 (IPIATTNLYFSNNLLNSLSKSNFQA), 67-90 (LPNLQYLDLSNNSIRDIEETLLDS), 92-114 (PGLKYLDLSWNKIRYVPKLSTAP), 116-137 (ALVSLNLVHNEISRLDNDLVSH), 138-161 (SPYMQTFLIQRNRIQSLPHDFFNS), and 164-191 (VPTLKTVKMAGNPWSCDCRMVNVKQFAD). Asn-77 carries N-linked (GlcNAc...) asparagine glycosylation. An N-linked (GlcNAc...) asparagine glycan is attached at Asn-220. Residues 305–332 (KKMQASSSTEPPITTTTMEPMTTSTMDS) are disordered. Residues 310 to 332 (SSSTEPPITTTTMEPMTTSTMDS) show a composition bias toward low complexity. Ig-like C2-type domains are found at residues 346–438 (PEID…FSVS) and 445–532 (PVII…ANLL). A disulfide bond links Cys-373 and Cys-422. 2 N-linked (GlcNAc...) asparagine glycosylation sites follow: Asn-403 and Asn-455. The cysteines at positions 466 and 516 are disulfide-linked. Asn-630 carries N-linked (GlcNAc...) asparagine glycosylation. Cys-660 and Cys-676 are disulfide-bonded. Asp-754 is a heme b binding site. His-755 serves as the catalytic Proton acceptor. Asp-756 provides a ligand contact to Ca(2+). 2 disulfides stabilise this stretch: Cys-775–Cys-785 and Cys-779–Cys-807. N-linked (GlcNAc...) asparagine glycosylation occurs at Asn-776. 4 residues coordinate Ca(2+): Thr-839, Tyr-841, Asp-843, and Ser-845. N-linked (GlcNAc...) asparagine glycosylation occurs at Asn-894. Heme b is bound by residues Glu-913 and His-1008. An LRR 7 repeat occupies 1085–1109 (ALDLAALNIQRGRDHGLPSWTEYRK). Cystine bridges form between Cys-1111–Cys-1168 and Cys-1209–Cys-1236. Residues Asn-1112 and Asn-1128 are each glycosylated (N-linked (GlcNAc...) asparagine). The stretch at 1204–1225 (LSKIICTNGDDIDRIQRDIFVY) is one LRR 8 repeat. An N-linked (GlcNAc...) asparagine glycan is attached at Asn-1228. A disordered region spans residues 1266 to 1297 (IGGDEKAKRRKRRHHHSKKSCHDKGKRRKSGD). Basic residues predominate over residues 1273-1295 (KRRKRRHHHSKKSCHDKGKRRKS). Asn-1300 carries N-linked (GlcNAc...) asparagine glycosylation.

Belongs to the peroxidase family. XPO subfamily. Ca(2+) serves as cofactor. The cofactor is heme b. In terms of tissue distribution, expressed in vulval muscles and in some neurons including PVQ. Expressed in the hypodermis and in coelomocytes.

Its subcellular location is the secreted. The protein resides in the extracellular space. The protein localises to the extracellular matrix. It is found in the basement membrane. It carries out the reaction L-lysyl-[collagen] + L-methionyl-[collagen] + H2O2 = [collagen]-L-lysyl-N-S-L-methionyl-[collagen] + 2 H2O + H(+). The catalysed reaction is bromide + H2O2 = hypobromite + H2O. The enzyme catalyses L-lysyl-[collagen] + L-methionyl-[collagen] + hypobromite = [collagen]-L-lysyl-N-S-L-methionyl-[collagen] + bromide + H2O + H(+). It catalyses the reaction L-tyrosyl-[protein] + bromide + H2O2 + H(+) = 3-bromo-L-tyrosyl-[protein] + 2 H2O. It carries out the reaction hypobromite + L-tyrosyl-[protein] + H(+) = 3-bromo-L-tyrosyl-[protein] + H2O. Catalyzes the two-electron oxidation of bromide by hydrogen peroxide and generates hypobromite as a reactive intermediate which mediates the formation of sulfilimine cross-links between methionine and hydroxylysine residues within an uncross-linked collagen IV/COL4A1 NC1 hexamer. Required for embryonic morphogenesis playing a role in epidermal elongation at the twofold stage of embryonic development. Required post-embryonically for basement membrane integrity and muscle-epidermal attachments, and specifically in the function of basement membrane components such as the type IV collagens. May have a role in inhibiting axon regeneration. May functionally antagonize the peroxidasin pxn-1. The sequence is that of Peroxidasin homolog pxn-2 from Caenorhabditis elegans.